The chain runs to 494 residues: Putative transporter SVOPL (494 aa).

10 consecutive transmembrane segments (helical) span residues 48–68 (IALFLIMGSTGVVEAMEIMLI), 86–106 (VAFVTTMVFFGYMVSSILFGL), 121–141 (FLWGAYFSLLTSFSPSYIWFV), 179–199 (VFWLAGSLLIISMASVVIPTI), 203–223 (WLIRIASIPGIILIMAFKFIP), 281–301 (TLQIWIIWLGISFAYYGVILA), 350–370 (IISTLGEIALNPLNILGINFL), 385–405 (LFFLLLNICTSSAGLIGFLFM), 431–451 (AIGMGTSGSLCRIGAMVAPFI), and 460–480 (FLGALCLFSSVCVVCAISAFT).

Belongs to the major facilitator superfamily.

Its subcellular location is the membrane. The polypeptide is Putative transporter SVOPL (Svopl) (Mus musculus (Mouse)).